The chain runs to 1257 residues: ATP-binding cassette sub-family B member 5 (1257 aa).

Residues 1 to 24 (MENSERAEEMQENYQRNGTAEEQP) are disordered. Residue Asn-17 is glycosylated (N-linked (GlcNAc...) asparagine). Residues 49–69 (ILGILASLVNGACLPLMPLVL) form a helical membrane-spanning segment. Positions 49 to 350 (ILGILASLVN…AAVPHFETFA (302 aa)) constitute an ABC transmembrane type-1 1 domain. Asn-85 and Asn-91 each carry an N-linked (GlcNAc...) asparagine glycan. The next 5 membrane-spanning stretches (helical) occupy residues 110–130 (YVGI…LWII), 181–201 (KIAL…VGLV), 203–223 (GWKL…SAAA), 294–314 (VYFF…SLIL), and 322–342 (IGTV…IGAA). Residues Asn-371, Asn-390, and Asn-423 are each glycosylated (N-linked (GlcNAc...) asparagine). The ABC transporter 1 domain occupies 386–622 (VEFKNVSFNY…RGLYYSLVMS (237 aa)). 421-428 (GLNGSGKS) serves as a coordination point for ATP. 2 helical membrane-spanning segments follow: residues 693–713 (VLGT…SIIF) and 737–757 (MIFV…GLFY). In terms of domain architecture, ABC transmembrane type-1 2 spans 693 to 980 (VLGTLASVLN…TLVLAPEYSK (288 aa)). 2 N-linked (GlcNAc...) asparagine glycosylation sites follow: Asn-789 and Asn-819. Residues 827 to 847 (VIISFIYGWEMTFLILSIAPV) form a helical membrane-spanning segment. Asn-910 carries an N-linked (GlcNAc...) asparagine glycan. 2 consecutive transmembrane segments (helical) span residues 917–937 (IIGS…AAGF) and 954–974 (MFIV…TLVL). An ABC transporter 2 domain is found at 1015 to 1253 (LEFREVSFFY…RDIYFKLVNA (239 aa)). Position 1050-1057 (1050-1057 (GSSGCGKS)) interacts with ATP. N-linked (GlcNAc...) asparagine glycosylation is found at Asn-1104 and Asn-1188.

Belongs to the ABC transporter superfamily. ABCB family. Multidrug resistance exporter (TC 3.A.1.201) subfamily. As to expression, expressed by CD133-expressing progenitor cells among epidermal melanocytes (at protein level). Widely expressed with specific expression in pigment cells. Highly expressed in several malignant tissues: highly expressed in clinical melanomas, with low expression in normal skin. In melanoma, marks malignant melanoma-initiating cells (MMIC), in which clinical virulence resides as a consequence of unlimited self-renewal capacity, resulting in inexorable tumor progression and metastasis. Also highly expressed in a number of leukemia cells. Expressed in basal limbal epithelium.

Its subcellular location is the cell membrane. The enzyme catalyses daunorubicin(in) + ATP + H2O = daunorubicin(out) + ADP + phosphate + H(+). Energy-dependent efflux transporter responsible for decreased drug accumulation in multidrug-resistant cells. Specifically present in limbal stem cells, where it plays a key role in corneal development and repair. The protein is ATP-binding cassette sub-family B member 5 of Homo sapiens (Human).